The following is a 441-amino-acid chain: COP9 signalosome complex subunit 1 (441 aa).

The segment at 1-28 (MERDEEASGPMMEMCTNGGEETSNRRPI) is disordered. The PCI domain maps to 230 to 400 (KYKLAARKFL…KILYARHADQ (171 aa)).

The protein belongs to the CSN1 family. Component of the CSN complex, probably composed of CSN1, CSN2, CSN3, CSN4, CSN5 (CSN5A or CSN5B), CSN6 (CSN6A or CSN6B), CSN7 and CSN8. Interacts with itself and (via PCI domain) with CSN7 (via PCI domain). In the CSN complex, it probably interacts directly with CSN2, CSN3, CSN4 and CSN5B. Interacts with the 26S proteasome subunit RPN6. Interacts (via N-terminal domain) with TSA1 (via C-terminal domain). Binds to the translation initiation factors TIF3C1, TIF3E1 and TIF3H1. Expressed in leaves, flowers, immature siliques, and light-grown roots.

It localises to the cytoplasm. It is found in the nucleus. Its function is as follows. Component of the COP9 signalosome complex (CSN), a complex involved in various cellular and developmental processes such as photomorphogenesis and auxin and jasmonate responses. The CSN complex is an essential regulator of the ubiquitin (Ubl) conjugation pathway by mediating the deneddylation of the cullin subunits of SCF-type E3 ligase complexes, leading to decrease the Ubl ligase activity of SCF. It is involved in repression of photomorphogenesis in darkness by regulating the activity of COP1-containing Ubl ligase complexes. The complex is also required for degradation of IAA6 by regulating the activity of the Ubl ligase SCF-TIR complex. In the complex, it plays a central role in CSN assembly. This is COP9 signalosome complex subunit 1 (CSN1) from Arabidopsis thaliana (Mouse-ear cress).